The primary structure comprises 645 residues: Aspartate--tRNA ligase, mitochondrial (645 aa).

A mitochondrion-targeting transit peptide spans 1 to 47 (MYFPSWLSQLYRGLSRPIRRTTQPIWGSLYRSLLQSSQRRIPEFSSF). The residue at position 219 (Thr219) is a Phosphothreonine. Ser242 carries the post-translational modification Phosphoserine. The interval 244-247 (QQFK) is aspartate. L-aspartate is bound at residue Arg266. 266–268 (RDE) serves as a coordination point for ATP. At Lys382 the chain carries N6-acetyllysine. An ATP-binding site is contributed by Glu535. Residue Arg542 coordinates L-aspartate. Residue 584 to 587 (GLDR) participates in ATP binding.

The protein belongs to the class-II aminoacyl-tRNA synthetase family. Type 1 subfamily. As to quaternary structure, homodimer.

The protein resides in the mitochondrion matrix. Its subcellular location is the mitochondrion membrane. The enzyme catalyses tRNA(Asp) + L-aspartate + ATP = L-aspartyl-tRNA(Asp) + AMP + diphosphate. In terms of biological role, catalyzes the attachment of aspartate to tRNA(Asp) in a two-step reaction: aspartate is first activated by ATP to form Asp-AMP and then transferred to the acceptor end of tRNA(Asp). The protein is Aspartate--tRNA ligase, mitochondrial (DARS2) of Homo sapiens (Human).